A 147-amino-acid polypeptide reads, in one-letter code: uncharacterized protein (147 aa).

This is an uncharacterized protein from Schizosaccharomyces pombe (strain 972 / ATCC 24843) (Fission yeast).